A 2372-amino-acid chain; its full sequence is Nonribosomal peptide synthase roqA (2372 aa).

Positions 217-610 (EHCRSQPDAE…VGRKDREVKI (394 aa)) are adenylation 1. The tract at residues 723-745 (AASSHSSTREQPSNQRDKEDVEL) is disordered. Residues 725 to 736 (SSHSSTREQPSN) show a composition bias toward polar residues. A Carrier 1 domain is found at 750-823 (SAKENTLCSV…KIARCTAESK (74 aa)). Ser784 is subject to O-(pantetheine 4'-phosphoryl)serine. Positions 856 to 1122 (EDIYPCTPLQ…FATFPFRTQL (267 aa)) are condensation 1. The segment at 1290-1679 (QPNSEAVCAW…VGRKDTQVKL (390 aa)) is adenylation 2. The Carrier 2 domain occupies 1819–1895 (KPTTEQERFV…LFCKHVILIQ (77 aa)). Ser1856 carries the O-(pantetheine 4'-phosphoryl)serine modification. The segment at 1962–2227 (TSNYTSTAIF…FNVLPCRIAI (266 aa)) is condensation 2.

Its pathway is alkaloid biosynthesis. Its function is as follows. Dipeptide synthase; part of the gene cluster that mediates the biosynthesis of the mycotoxins roquefortine C and meleagrin. The first stage is catalyzed by the dipeptide synthase roqA which condenses histidine and tryptophan to produce histidyltryptophanyldiketopiperazine (HTD). HTD is then converted to roquefortine C through two possible pathways. In the first pathway, prenyltransferase roqD transforms HTD to the intermediate roquefortine D, which is in turn converted to roquefortine C by the cytochrome P450 monooxygenase roqR. In the second pathway, HTD is first converted to the intermediate dehydrohistidyltryptophanyldi-ketopiperazine (DHTD) by roqR which is then prenylated by roqD to form roquefortine C. Roquefortine C can be further transformed to meleagrin via three more reactions including oxydation to glandicolin A by roqM, which is further reduced to glandicoline B by roqO. Finally, glandicoline B is converted to meleagrin by the glandicoline B O-methyltransferase roqN. More studies identified further branching and additional metabolites produced by the roquefortine/meleagrin cluster, including roquefortine F, roquefortine L, roquefortine M, roquefortine N and neoxaline. This chain is Nonribosomal peptide synthase roqA, found in Penicillium rubens (strain ATCC 28089 / DSM 1075 / NRRL 1951 / Wisconsin 54-1255) (Penicillium chrysogenum).